Consider the following 258-residue polypeptide: Ditrans,polycis-undecaprenyl-diphosphate synthase ((2E,6E)-farnesyl-diphosphate specific) (258 aa).

Asp-24 is a catalytic residue. Asp-24 is a Mg(2+) binding site. Residues 25 to 28 (GNGR), Trp-29, Arg-37, His-41, and 69 to 71 (SSE) contribute to the substrate site. Catalysis depends on Asn-72, which acts as the Proton acceptor. Substrate-binding positions include Trp-73, Arg-75, Arg-192, and 198-200 (RIS). Glu-211 is a Mg(2+) binding site.

This sequence belongs to the UPP synthase family. As to quaternary structure, homodimer. Requires Mg(2+) as cofactor.

The catalysed reaction is 8 isopentenyl diphosphate + (2E,6E)-farnesyl diphosphate = di-trans,octa-cis-undecaprenyl diphosphate + 8 diphosphate. Its function is as follows. Catalyzes the sequential condensation of isopentenyl diphosphate (IPP) with (2E,6E)-farnesyl diphosphate (E,E-FPP) to yield (2Z,6Z,10Z,14Z,18Z,22Z,26Z,30Z,34E,38E)-undecaprenyl diphosphate (di-trans,octa-cis-UPP). UPP is the precursor of glycosyl carrier lipid in the biosynthesis of bacterial cell wall polysaccharide components such as peptidoglycan and lipopolysaccharide. In Xanthomonas oryzae pv. oryzae (strain KACC10331 / KXO85), this protein is Ditrans,polycis-undecaprenyl-diphosphate synthase ((2E,6E)-farnesyl-diphosphate specific).